We begin with the raw amino-acid sequence, 409 residues long: WW domain-containing oxidoreductase (409 aa).

A disordered region spans residues 1-23 (MIALPDTDSEDELPPGWEERATD). WW domains lie at 11 to 44 (DELP…HPRT) and 52 to 86 (GELP…DPRL). 128–134 (GANCGIG) contributes to the NADP(+) binding site. Substrate is bound at residue Ser-257. The active-site Proton acceptor is Tyr-288.

It belongs to the short-chain dehydrogenases/reductases (SDR) family.

The protein localises to the cytoplasm. It is found in the mitochondrion. It localises to the golgi apparatus. The protein resides in the lysosome. Functionally, putative oxidoreductase. May control genotoxic stress-induced cell death. May play a role in TGFB1 signaling and TGFB1-mediated cell death. May also play a role in tumor necrosis factor (TNF)-mediated cell death. May play a role in Wnt signaling. The polypeptide is WW domain-containing oxidoreductase (Wwox) (Drosophila melanogaster (Fruit fly)).